Here is a 238-residue protein sequence, read N- to C-terminus: Transcription termination/antitermination protein NusG (238 aa).

The protein belongs to the NusG family.

Participates in transcription elongation, termination and antitermination. This chain is Transcription termination/antitermination protein NusG, found in Mycobacterium tuberculosis (strain CDC 1551 / Oshkosh).